Consider the following 689-residue polypeptide: DNA-directed RNA polymerase subunit beta' (689 aa).

Positions 76, 78, 94, and 97 each coordinate Zn(2+). Mg(2+)-binding residues include Asp496, Asp498, and Asp500.

It belongs to the RNA polymerase beta' chain family. RpoC1 subfamily. In terms of assembly, in plastids the minimal PEP RNA polymerase catalytic core is composed of four subunits: alpha, beta, beta', and beta''. When a (nuclear-encoded) sigma factor is associated with the core the holoenzyme is formed, which can initiate transcription. The cofactor is Mg(2+). It depends on Zn(2+) as a cofactor.

Its subcellular location is the plastid. The protein localises to the chloroplast. The catalysed reaction is RNA(n) + a ribonucleoside 5'-triphosphate = RNA(n+1) + diphosphate. Its function is as follows. DNA-dependent RNA polymerase catalyzes the transcription of DNA into RNA using the four ribonucleoside triphosphates as substrates. The chain is DNA-directed RNA polymerase subunit beta' from Illicium oligandrum (Star anise).